The following is a 40-amino-acid chain: Sauvagin (40 aa).

At Gln1 the chain carries Pyrrolidone carboxylic acid. Ile40 carries the isoleucine amide modification.

The protein belongs to the sauvagine/corticotropin-releasing factor/urotensin I family.

It localises to the secreted. Functionally, hypotensive and diuretic peptide. This chain is Sauvagin, found in Phyllomedusa sauvagei (Sauvage's leaf frog).